Reading from the N-terminus, the 379-residue chain is Multicilin (379 aa).

Residues 1 to 129 (MQACEGSAAG…AMDDLIADSS (129 aa)) are necessary and sufficient for its degradation during the cell cycle. 2 disordered regions span residues 26–71 (SRRT…APLP) and 88–107 (LGTE…PSLQ). Residues 92–107 (ASPSGDSSASQNPSLQ) show a composition bias toward polar residues. Residues 130-379 (SLMSPPLTNS…GGYKFRWVPS (250 aa)) are necessary and sufficient for proper nuclear localization. The segment at 171–241 (PPPTEQYWKE…SVLDKLMITQ (71 aa)) is necessary and sufficient for interaction with GMNN and sufficient for homodimerization. Positions 175–223 (EQYWKEVADQNQRALGTALIENNQLHVTLTQKQEEIASLRERNVQLKEL) form a coiled coil. Over residues 291–309 (NRDPKRPRLQPEPDSKDCS) the composition is skewed to basic and acidic residues. The tract at residues 291–312 (NRDPKRPRLQPEPDSKDCSSRN) is disordered.

It belongs to the geminin family. As to quaternary structure, heterodimer (via coiled-coil domain) with GMNN (via coiled-coil domain); targets GMNN to the nucleus. Can form homodimers (in vitro, via coiled-coil domain), but these are much less stable than the heterodimer formed with GMNN.

The protein localises to the nucleus. Its function is as follows. Transcription regulator specifically required for multiciliate cell differentiation. Acts in a multiprotein complex containing E2F4 and E2F5 that binds and activates genes required for centriole biogenesis. Required for the deuterosome-mediated acentriolar pathway. Plays a role in mitotic cell cycle progression by promoting cell cycle exit. Modulates GMNN activity by reducing its affinity for CDT1. The chain is Multicilin (Mcidas) from Mus musculus (Mouse).